We begin with the raw amino-acid sequence, 130 residues long: UPF0102 protein SCO5602 (130 aa).

It belongs to the UPF0102 family.

The protein is UPF0102 protein SCO5602 of Streptomyces coelicolor (strain ATCC BAA-471 / A3(2) / M145).